A 210-amino-acid chain; its full sequence is Natriuretic peptide BM026 (210 aa).

The N-terminal stretch at 1–26 (MVGPSRLAGGGLLLLLLALLPVALDG) is a signal peptide. The interval 83–99 (CFGHKIDRISHSSGMGC) is natriuretic peptide domain 1. An intrachain disulfide couples Cys-83 to Cys-99. The span at 122–134 (ESKKSRAARDRMV) shows a compositional bias: basic and acidic residues. The tract at residues 122-210 (ESKKSRAARD…QFNSKSSQVA (89 aa)) is disordered. Positions 140–150 (AGGGGGGGGGD) are enriched in gly residues. A compositionally biased stretch (basic and acidic residues) spans 156–176 (ELAKKDQHNNCFGRRIDRISH). Positions 166-182 (CFGRRIDRISHSTDLGC) are natriuretic peptide domain 2. Residues Cys-166 and Cys-182 are joined by a disulfide bond. Over residues 201 to 210 (QFNSKSSQVA) the composition is skewed to polar residues.

Belongs to the natriuretic peptide family. In terms of tissue distribution, expressed by the venom gland.

It localises to the secreted. Its function is as follows. Natriuretic peptide that dose-dependently induces the rapid relaxation of rat aortic strips phenylephrine-precontracted. Acts by stimulating cGMP production in a dose-dependent manner (by probably activating NPR1 and/or NPR2). May also show potent hypotensive effects. The polypeptide is Natriuretic peptide BM026 (Bungarus multicinctus (Many-banded krait)).